The chain runs to 683 residues: Dipeptidyl-peptidase 5 (683 aa).

Positions 1–19 are cleaved as a signal peptide; that stretch reads MHSLFKQLVFFLVMTLTAA. N-linked (GlcNAc...) asparagine glycans are attached at residues asparagine 53, asparagine 69, asparagine 103, asparagine 116, asparagine 126, and asparagine 400. Residues serine 535, aspartate 617, and histidine 649 each act as charge relay system in the active site.

It belongs to the peptidase S9C family.

The protein localises to the secreted. It is found in the cytoplasm. It localises to the nucleus. The protein is Dipeptidyl-peptidase 5 of Schizosaccharomyces pombe (strain 972 / ATCC 24843) (Fission yeast).